Consider the following 601-residue polypeptide: HIRA-interacting protein 3 (601 aa).

Disordered stretches follow at residues 60–469 (KMQA…EDHP) and 546–601 (STGR…GDSS). The segment covering 66–76 (GTREGKPDFIK) has biased composition (basic and acidic residues). Residues Ser85, Ser96, and Ser98 each carry the phosphoserine modification. Positions 97 to 113 (ESESSSSPSSPDGSGPS) are enriched in low complexity. A compositionally biased stretch (basic residues) spans 117–129 (RTTKKTCLRRALK). A compositionally biased stretch (basic and acidic residues) spans 130–149 (KAVESTDEDHQTDLDAKMGL). Ser134 carries the post-translational modification Phosphoserine. Phosphothreonine is present on residues Thr135 and Thr141. Phosphoserine occurs at positions 152, 153, and 163. Position 167 is a phosphothreonine (Thr167). A compositionally biased stretch (basic and acidic residues) spans 186-205 (GAKDKQVPLKADRKQVREES). A phosphoserine mark is found at Ser205, Ser207, Ser208, Ser231, Ser234, Ser238, Ser313, Ser359, Ser360, Ser384, and Ser389. Basic and acidic residues-rich tracts occupy residues 238–264 (SPAK…ERKS) and 313–324 (SSEKGEAEKEEG). Residues 347 to 378 (RTQTESGRRQNTSSRDDSNSTQEQAAAQGTTK) show a composition bias toward polar residues. Low complexity predominate over residues 379–388 (SGSLGSSNGD). The residue at position 391 (Thr391) is a Phosphothreonine. A phosphoserine mark is found at Ser396 and Ser398. Residues 413–432 (SNKSSKNGQARSCSSSSDSS) show a composition bias toward low complexity. The interval 429-572 (SDSSPEPTGQ…TSPGETYRRT (144 aa)) is interaction with the histone H2A-H2B complex. Positions 556 to 566 (WNPSGEGTSPG) are enriched in polar residues. Residues Ser564, Ser575, Ser595, Ser596, and Ser600 each carry the phosphoserine modification. Basic and acidic residues predominate over residues 568-580 (TYRRTLDSEEEQP).

As to quaternary structure, interacts (via C-terminus) with histone H2A-H2B dimers; the interaction is direct. Interacts with HIRA. Interacts with CK2. In terms of processing, phosphorylated by CK2.

It localises to the nucleus. Functionally, histone chaperone that carries a H2A-H2B histone complex and facilitates its deposition onto chromatin. The polypeptide is HIRA-interacting protein 3 (Mus musculus (Mouse)).